The chain runs to 34 residues: Potassium channel toxin (34 aa).

3 disulfides stabilise this stretch: C6-C25, C11-C29, and C15-C31.

It belongs to the short scorpion toxin superfamily. Potassium channel inhibitor family. Alpha-KTx 21 subfamily. In terms of tissue distribution, expressed by the venom gland.

It is found in the secreted. Toxin that blocks voltage-gated potassium channels (Kv). This chain is Potassium channel toxin, found in Tityus metuendus (Scorpion).